Reading from the N-terminus, the 842-residue chain is Glycogen phosphorylase, muscle form (842 aa).

Ser-2 carries the N-acetylserine modification. The residue at position 15 (Ser-15) is a Phosphoserine; by PHK; in form phosphorylase A. 2 residues coordinate AMP: Asp-43 and Tyr-76. Residues Tyr-204 and Tyr-227 each carry the phosphotyrosine modification. An AMP-binding site is contributed by 310 to 319 (RRFKSSKFGC). Residue Ser-430 is modified to Phosphoserine. At Tyr-473 the chain carries Phosphotyrosine. Lys-681 carries the post-translational modification N6-(pyridoxal phosphate)lysine. 2 positions are modified to phosphoserine: Ser-747 and Ser-748.

Belongs to the glycogen phosphorylase family. In terms of assembly, homodimer. Homotetramer; to form the enzymatically active phosphorylase A. Requires pyridoxal 5'-phosphate as cofactor. Post-translationally, phosphorylation of Ser-15 converts phosphorylase B (unphosphorylated) to phosphorylase A.

The catalysed reaction is [(1-&gt;4)-alpha-D-glucosyl](n) + phosphate = [(1-&gt;4)-alpha-D-glucosyl](n-1) + alpha-D-glucose 1-phosphate. With respect to regulation, allosterically regulated through the non-covalent binding of metabolites, being activated by AMP and inhibited by ATP, ADP, and glucose-6-phosphate. The activity is also controlled by post-translational modifications including phosphorylation. Functionally, allosteric enzyme that catalyzes the rate-limiting step in glycogen catabolism, the phosphorolytic cleavage of glycogen to produce glucose-1-phosphate, and plays a central role in maintaining cellular and organismal glucose homeostasis. The polypeptide is Glycogen phosphorylase, muscle form (Ovis aries (Sheep)).